A 427-amino-acid chain; its full sequence is Zinc finger protein 134 (427 aa).

A Glycyl lysine isopeptide (Lys-Gly) (interchain with G-Cter in SUMO2) cross-link involves residue K20. A C2H2-type 1 zinc finger spans residues 50–72 (LPCDICGPILKDILHLDEHQGTH). Residues 78 to 100 (HTCGACGRQFWFSANLHQYQKCY) form a C2H2-type 2; degenerate zinc finger. Residues K135 and K139 each participate in a glycyl lysine isopeptide (Lys-Gly) (interchain with G-Cter in SUMO2) cross-link. 9 consecutive C2H2-type zinc fingers follow at residues 176–198 (YKCS…QRIH), 204–226 (YECS…QRIH), 232–254 (YECS…KRIH), 260–282 (YKCN…QRVH), 288–310 (YKCS…ESIH), 316–338 (YDCS…QRIH), 344–366 (FECI…QRVH), 372–394 (FVCS…QRVH), and 400–422 (YECS…QKVH).

The protein belongs to the krueppel C2H2-type zinc-finger protein family.

It localises to the nucleus. May be involved in transcriptional regulation. The polypeptide is Zinc finger protein 134 (ZNF134) (Homo sapiens (Human)).